Here is a 193-residue protein sequence, read N- to C-terminus: Annexin-2 receptor (193 aa).

Over residues 78–87 (QSTLEPSTAK) the composition is skewed to polar residues. A disordered region spans residues 78–111 (QSTLEPSTAKPTEFSWPGTQKQQEAPVEEVGQAE).

In terms of tissue distribution, widely expressed. Highly expressed in lymphocytes. Expressed in both resting CD4(+) and CD8(+) T-cells.

Functionally, may act as a receptor for annexin II on marrow stromal cells to induce osteoclast formation. The protein is Annexin-2 receptor (ANXA2R) of Homo sapiens (Human).